The primary structure comprises 160 residues: 2-C-methyl-D-erythritol 2,4-cyclodiphosphate synthase (160 aa).

Positions 9 and 11 each coordinate a divalent metal cation. 4-CDP-2-C-methyl-D-erythritol 2-phosphate is bound by residues 9 to 11 and 35 to 36; these read DVH and HS. Position 43 (histidine 43) interacts with a divalent metal cation. Residues 57–59, 62–66, 133–136, phenylalanine 140, and arginine 143 each bind 4-CDP-2-C-methyl-D-erythritol 2-phosphate; these read DIG, FPDTD, and TTTE.

It belongs to the IspF family. As to quaternary structure, homotrimer. Requires a divalent metal cation as cofactor.

The enzyme catalyses 4-CDP-2-C-methyl-D-erythritol 2-phosphate = 2-C-methyl-D-erythritol 2,4-cyclic diphosphate + CMP. It functions in the pathway isoprenoid biosynthesis; isopentenyl diphosphate biosynthesis via DXP pathway; isopentenyl diphosphate from 1-deoxy-D-xylulose 5-phosphate: step 4/6. Involved in the biosynthesis of isopentenyl diphosphate (IPP) and dimethylallyl diphosphate (DMAPP), two major building blocks of isoprenoid compounds. Catalyzes the conversion of 4-diphosphocytidyl-2-C-methyl-D-erythritol 2-phosphate (CDP-ME2P) to 2-C-methyl-D-erythritol 2,4-cyclodiphosphate (ME-CPP) with a corresponding release of cytidine 5-monophosphate (CMP). This is 2-C-methyl-D-erythritol 2,4-cyclodiphosphate synthase from Haemophilus ducreyi (strain 35000HP / ATCC 700724).